We begin with the raw amino-acid sequence, 74 residues long: Cytoplasmic envelopment protein 3 (74 aa).

Residue Gly2 is the site of N-myristoyl glycine; by host attachment. Positions 15 to 16 (LV) match the Di-leucine-like internalization motif motif. The interval 34-40 (SMEEFDI) is asp/Glu-rich (acidic). The segment at 36-74 (EEFDIPPPPPLPKPVFKQPGPYKIPARSQRCPSKRRDPY) is disordered.

The protein belongs to the herpesviridae cytoplasmic envelopment protein 3 family. Interacts with cytoplasmic envelopment protein 2; this interaction is essential for the proper localization of each protein to the assembly complex and thus for the production of infectious virus. In terms of processing, myristoylation and palmitoylation (probably on one or more of the nearby cysteines at the N-terminus) enable membrane-binding and Golgi apparatus-specific targeting and are essential for efficient packaging. Phosphorylated. Phosphorylation does not seem to be required for recycling to the host Golgi apparatus. Packaging is selective for underphosphorylated forms.

The protein localises to the virion tegument. The protein resides in the virion membrane. It localises to the host cell membrane. Its subcellular location is the host Golgi apparatus membrane. Functionally, plays an important role in the cytoplasmic envelopment of tegument proteins and capsids during the assembly and egress processes. Also participates in viral entry at the fusion step probably by regulating the core fusion machinery. This Equine herpesvirus 1 (strain Ab4p) (EHV-1) protein is Cytoplasmic envelopment protein 3.